We begin with the raw amino-acid sequence, 151 residues long: Large-conductance mechanosensitive channel (151 aa).

2 helical membrane-spanning segments follow: residues 12 to 32 and 71 to 91; these read GNIVDLAVAVVIGTAFTALVT and VLLSATINFILVAGVVYFLVV. The tract at residues 125 to 151 is disordered; that stretch reads NSNSSGRHEAPGTAGTPPPNYGPRADT.

It belongs to the MscL family. Homopentamer.

The protein resides in the cell membrane. Its function is as follows. Channel that opens in response to stretch forces in the membrane lipid bilayer. May participate in the regulation of osmotic pressure changes within the cell. The chain is Large-conductance mechanosensitive channel from Mycobacterium ulcerans (strain Agy99).